Consider the following 312-residue polypeptide: Malate dehydrogenase (312 aa).

Residues 7 to 13 and Asp34 contribute to the NAD(+) site; that span reads GAAGGIG. Residues Arg81 and Arg87 each contribute to the substrate site. NAD(+) is bound by residues Asn94 and 117–119; that span reads ITN. Substrate is bound by residues Asn119 and Arg153. Catalysis depends on His177, which acts as the Proton acceptor. Residue Met227 coordinates NAD(+).

It belongs to the LDH/MDH superfamily. MDH type 1 family. Homodimer.

It catalyses the reaction (S)-malate + NAD(+) = oxaloacetate + NADH + H(+). Functionally, catalyzes the reversible oxidation of malate to oxaloacetate. The polypeptide is Malate dehydrogenase (Escherichia coli O139:H28 (strain E24377A / ETEC)).